Reading from the N-terminus, the 285-residue chain is Tryptophan synthase alpha chain (285 aa).

Catalysis depends on proton acceptor residues E53 and D64.

The protein belongs to the TrpA family. As to quaternary structure, tetramer of two alpha and two beta chains.

The catalysed reaction is (1S,2R)-1-C-(indol-3-yl)glycerol 3-phosphate + L-serine = D-glyceraldehyde 3-phosphate + L-tryptophan + H2O. The protein operates within amino-acid biosynthesis; L-tryptophan biosynthesis; L-tryptophan from chorismate: step 5/5. The alpha subunit is responsible for the aldol cleavage of indoleglycerol phosphate to indole and glyceraldehyde 3-phosphate. In Bordetella bronchiseptica (strain ATCC BAA-588 / NCTC 13252 / RB50) (Alcaligenes bronchisepticus), this protein is Tryptophan synthase alpha chain.